The sequence spans 337 residues: MVREKVTVSTRTLQWKCVESRTDSKRLYYGRFILSPLMKGQADTIGIAMRRALLGEIEGTCITRVKFEKVPHEYSTITGIQESVHEIIMNLKEIVLRSNLYGTSEASVCVKGPGYVTAQDIILPPYVEIVDNTQHIASLTEPIDFCIGLQIERNRGYLIKTPQNFQDGSYPIDAVFMPVRNANHSIHSYGNGNEKQEILFLEIWTNGSLTPKEALHEASRNLIDLFIPFLHMEEDNLYLQDNQHTVPLSPFTFHDKLAKLIKNNKKIALKSIFIDQSELPSRIYNCLKMSNIYTLLDLLNNSQEDLMKIEHFRSEDIKQILGILEKYFVIDLAKNKF.

Residues 1 to 233 are alpha N-terminal domain (alpha-NTD); sequence MVREKVTVST…DLFIPFLHME (233 aa). Residues 264–337 are alpha C-terminal domain (alpha-CTD); sequence NKKIALKSIF…FVIDLAKNKF (74 aa).

Belongs to the RNA polymerase alpha chain family. As to quaternary structure, in plastids the minimal PEP RNA polymerase catalytic core is composed of four subunits: alpha, beta, beta', and beta''. When a (nuclear-encoded) sigma factor is associated with the core the holoenzyme is formed, which can initiate transcription.

Its subcellular location is the plastid. It localises to the chloroplast. The catalysed reaction is RNA(n) + a ribonucleoside 5'-triphosphate = RNA(n+1) + diphosphate. Functionally, DNA-dependent RNA polymerase catalyzes the transcription of DNA into RNA using the four ribonucleoside triphosphates as substrates. The sequence is that of DNA-directed RNA polymerase subunit alpha from Atropa belladonna (Belladonna).